The chain runs to 53 residues: uncharacterized protein (53 aa).

It localises to the mitochondrion. This is an uncharacterized protein from Saccharomyces cerevisiae (strain ATCC 204508 / S288c) (Baker's yeast).